The sequence spans 484 residues: Dual specificity protein kinase CLK1 (484 aa).

The tract at residues 1–42 is disordered; sequence MRHSKRTYCPDWDDKDWDYGKWRSSSSHKRRKRSHSSAQENK. Residues 26–35 are compositionally biased toward basic residues; that stretch reads SSHKRRKRSH. Serine 61 is modified (phosphoserine). Residues 79–146 form a disordered region; it reads DYTQGCEPGH…RTRSVEDDEE (68 aa). The segment covering 86 to 97 has biased composition (basic and acidic residues); that stretch reads PGHRQRDHESRY. A compositionally biased stretch (low complexity) spans 100 to 112; it reads HSSKSSGRSGRSS. Residues 113-138 are compositionally biased toward basic residues; it reads YKSKHRIHHSTSHRRSHGKSHRRKRT. Phosphothreonine is present on threonine 138. Position 140 is a phosphoserine (serine 140). Positions 161–477 constitute a Protein kinase domain; sequence YEIVDTLGEG…LREALKHPFF (317 aa). ATP is bound by residues 167-175 and lysine 191; that span reads LGEGAFGKV. The active-site Proton acceptor is aspartate 288.

It belongs to the protein kinase superfamily. CMGC Ser/Thr protein kinase family. Lammer subfamily. As to quaternary structure, interacts with PPIG and UBL5. In terms of processing, autophosphorylates on all three types of residues. In terms of tissue distribution, endothelial cells.

The protein localises to the nucleus. The catalysed reaction is L-seryl-[protein] + ATP = O-phospho-L-seryl-[protein] + ADP + H(+). The enzyme catalyses L-threonyl-[protein] + ATP = O-phospho-L-threonyl-[protein] + ADP + H(+). It carries out the reaction L-tyrosyl-[protein] + ATP = O-phospho-L-tyrosyl-[protein] + ADP + H(+). Its activity is regulated as follows. Regulates splicing of its own pre-mRNA according to its kinase activity; increased expression of the catalytically active form influences splicing to generate the catalytically inactive splicing variant lacking the kinase domain. Leucettine L41 inhibits its kinase activity and affects the regulation of alternative splicing mediated by phosphorylation of SR proteins. Dual specificity kinase acting on both serine/threonine and tyrosine-containing substrates. Phosphorylates serine- and arginine-rich (SR) proteins of the spliceosomal complex and may be a constituent of a network of regulatory mechanisms that enable SR proteins to control RNA splicing. Phosphorylates: SRSF1, SRSF3 and PTPN1. Regulates the alternative splicing of tissue factor (F3) pre-mRNA in endothelial cells. This chain is Dual specificity protein kinase CLK1, found in Homo sapiens (Human).